Consider the following 37-residue polypeptide: Large ribosomal subunit protein bL36 (37 aa).

This sequence belongs to the bacterial ribosomal protein bL36 family.

This is Large ribosomal subunit protein bL36 from Bifidobacterium adolescentis (strain ATCC 15703 / DSM 20083 / NCTC 11814 / E194a).